We begin with the raw amino-acid sequence, 66 residues long: Beta-defensin 13 (66 aa).

A signal peptide spans 1-22; it reads MRIFSLIVAGLVLLIQLHPAKG. 3 disulfide bridges follow: C30–C59, C37–C51, and C41–C60.

This sequence belongs to the beta-defensin family.

It is found in the secreted. Has antibacterial activity. This chain is Beta-defensin 13 (Defb13), found in Rattus norvegicus (Rat).